Consider the following 270-residue polypeptide: Sec-independent protein translocase protein TatC (270 aa).

Transmembrane regions (helical) follow at residues 25 to 45 (FIAV…LFDI), 75 to 95 (VSLL…FWMF), 111 to 131 (VVIL…FIVF), 156 to 176 (LGFA…PLVL), 195 to 211 (KYAI…ITPP), and 213 to 233 (VVTQ…SIIG). The interval 243-270 (SDEEEAAENSDVQTDKSTDDTTPGEDQN) is disordered.

Belongs to the TatC family. As to quaternary structure, the Tat system comprises two distinct complexes: a TatABC complex, containing multiple copies of TatA, TatB and TatC subunits, and a separate TatA complex, containing only TatA subunits. Substrates initially bind to the TatABC complex, which probably triggers association of the separate TatA complex to form the active translocon.

It is found in the cell inner membrane. In terms of biological role, part of the twin-arginine translocation (Tat) system that transports large folded proteins containing a characteristic twin-arginine motif in their signal peptide across membranes. Together with TatB, TatC is part of a receptor directly interacting with Tat signal peptides. This chain is Sec-independent protein translocase protein TatC, found in Desulforapulum autotrophicum (strain ATCC 43914 / DSM 3382 / VKM B-1955 / HRM2) (Desulfobacterium autotrophicum).